A 305-amino-acid polypeptide reads, in one-letter code: Ribosomal RNA small subunit methyltransferase H (305 aa).

S-adenosyl-L-methionine is bound by residues 33 to 35 (GGY), aspartate 51, phenylalanine 82, aspartate 96, and glutamine 103.

The protein belongs to the methyltransferase superfamily. RsmH family.

The protein localises to the cytoplasm. It catalyses the reaction cytidine(1402) in 16S rRNA + S-adenosyl-L-methionine = N(4)-methylcytidine(1402) in 16S rRNA + S-adenosyl-L-homocysteine + H(+). Specifically methylates the N4 position of cytidine in position 1402 (C1402) of 16S rRNA. This chain is Ribosomal RNA small subunit methyltransferase H, found in Rickettsia bellii (strain OSU 85-389).